A 28-amino-acid polypeptide reads, in one-letter code: Potassium channel toxin kappa-KTx 2.9 (28 aa).

2 disulfide bridges follow: Cys-4-Cys-22 and Cys-8-Cys-18.

It belongs to the short scorpion toxin superfamily. Potassium channel inhibitor family. Gamma-KTx 2 subfamily. Post-translationally, contains 2 disulfide bonds. Expressed by the venom gland.

It localises to the secreted. Reversibly blocks voltage-gated potassium channels Kv1.2/KCNA2 and Kv1.3/KCNA3. This Pandinus imperator (Emperor scorpion) protein is Potassium channel toxin kappa-KTx 2.9.